The chain runs to 46 residues: Iota-conotoxin-like r11b (46 aa).

4-hydroxyproline is present on residues Pro-2 and Pro-11. 4 disulfides stabilise this stretch: Cys-5–Cys-19, Cys-12–Cys-22, Cys-18–Cys-27, and Cys-21–Cys-38. Position 29 is a 4-hydroxyproline (Pro-29). Phe-44 carries the D-phenylalanine modification.

The natural D-Phe form of the peptide is more potent than the synthetic L-Phe form. As to expression, expressed by the venom duct.

The protein localises to the secreted. Its function is as follows. Iota-conotoxins bind to voltage-gated sodium channels (Nav) and act as agonists by shifting the voltage-dependence of activation to more hyperpolarized levels. Produces excitatory symptoms when injected intracranially into mice and is lethal at higher doses. Exposure to frog cutaneous pectoris induces spontaneous and repetitive action potentials. This effect is slowly reversible. Natural peptide (with D-Phe) is active on nerve, but not on muscle. Synthetic peptide (with L-Phe) is not active on both nerve and muscle. The chain is Iota-conotoxin-like r11b from Conus radiatus (Rayed cone).